The primary structure comprises 585 residues: ATP-dependent RNA helicase DBP3 (585 aa).

Positions 1-124 (MTTSATEKAL…SSSASAASFT (124 aa)) are disordered. A compositionally biased stretch (low complexity) spans 26–43 (AKAAAAAGASASTSLEGS). 2 stretches are compositionally biased toward basic residues: residues 52-64 (KDKK…KDKK) and 79-93 (AKKR…KKAA). Residues 94 to 124 (AKSGAATSLESTPAASPAPAASSSASAASFT) show a composition bias toward low complexity. Positions 159–187 (FRELDGKVDAAVKKTLDSQGFSTPTPIQA) match the Q motif motif. The Helicase ATP-binding domain maps to 190–377 (WPVLLQNKDV…ESFMNGPVRV (188 aa)). Residue 203-210 (AETGSGKT) participates in ATP binding. Positions 322-325 (DEAD) match the DEAD box motif. A Helicase C-terminal domain is found at 406–554 (RLNDFLRSVN…KVPDALTKFP (149 aa)).

Belongs to the DEAD box helicase family. DDX5/DBP2 subfamily.

It localises to the nucleus. The protein resides in the nucleolus. The catalysed reaction is ATP + H2O = ADP + phosphate + H(+). Its function is as follows. ATP-dependent RNA helicase required for 60S ribosomal subunit synthesis. Involved in efficient pre-rRNA processing, predominantly at site A3, which is necessary for the normal formation of 25S and 5.8S rRNAs. This Mycosarcoma maydis (Corn smut fungus) protein is ATP-dependent RNA helicase DBP3 (DBP3).